We begin with the raw amino-acid sequence, 210 residues long: Thiamine-phosphate synthase (210 aa).

4-amino-2-methyl-5-(diphosphooxymethyl)pyrimidine contacts are provided by residues 43-47 (QLREK) and asparagine 75. Aspartate 76 and aspartate 95 together coordinate Mg(2+). Serine 114 contributes to the 4-amino-2-methyl-5-(diphosphooxymethyl)pyrimidine binding site. 140 to 142 (TST) is a 2-[(2R,5Z)-2-carboxy-4-methylthiazol-5(2H)-ylidene]ethyl phosphate binding site. Lysine 143 contacts 4-amino-2-methyl-5-(diphosphooxymethyl)pyrimidine. 2-[(2R,5Z)-2-carboxy-4-methylthiazol-5(2H)-ylidene]ethyl phosphate is bound by residues glycine 170 and 190-191 (IS).

Belongs to the thiamine-phosphate synthase family. Mg(2+) serves as cofactor.

It carries out the reaction 2-[(2R,5Z)-2-carboxy-4-methylthiazol-5(2H)-ylidene]ethyl phosphate + 4-amino-2-methyl-5-(diphosphooxymethyl)pyrimidine + 2 H(+) = thiamine phosphate + CO2 + diphosphate. It catalyses the reaction 2-(2-carboxy-4-methylthiazol-5-yl)ethyl phosphate + 4-amino-2-methyl-5-(diphosphooxymethyl)pyrimidine + 2 H(+) = thiamine phosphate + CO2 + diphosphate. The catalysed reaction is 4-methyl-5-(2-phosphooxyethyl)-thiazole + 4-amino-2-methyl-5-(diphosphooxymethyl)pyrimidine + H(+) = thiamine phosphate + diphosphate. It functions in the pathway cofactor biosynthesis; thiamine diphosphate biosynthesis; thiamine phosphate from 4-amino-2-methyl-5-diphosphomethylpyrimidine and 4-methyl-5-(2-phosphoethyl)-thiazole: step 1/1. Condenses 4-methyl-5-(beta-hydroxyethyl)thiazole monophosphate (THZ-P) and 2-methyl-4-amino-5-hydroxymethyl pyrimidine pyrophosphate (HMP-PP) to form thiamine monophosphate (TMP). In Clostridioides difficile (strain 630) (Peptoclostridium difficile), this protein is Thiamine-phosphate synthase.